The sequence spans 1447 residues: Sister chromatid cohesion protein PDS5 homolog B (1447 aa).

One copy of the HEAT repeat lies at 383 to 419 (LLVNDHLLNFVRERTLDKRWRVRKEAMMGLAQIYKKY). Positions 1117-1447 (KSFFTPGKPK…RRRSAKRERR (331 aa)) are disordered. N6-acetyllysine is present on Lys-1136. Positions 1137-1155 (PLSSAGKQSQTKSSRMETV) are enriched in polar residues. Phosphoserine occurs at positions 1140, 1162, 1166, 1176, 1182, and 1191. Positions 1156–1167 (SNASSSSNPSSP) are enriched in low complexity. Basic and acidic residues predominate over residues 1172-1184 (GRLDSSEMDHSEN). Basic and acidic residues-rich tracts occupy residues 1196-1214 (KKSDKRDDSDLVRSELEKP) and 1225-1243 (QEEKLGMDDLTKLVQEQKP). Residues 1245–1254 (GSQRSRKRGH) are compositionally biased toward basic residues. Residues 1249 to 1261 (SRKRGHTASESDE) constitute a DNA-binding region (a.T hook 1). At Thr-1255 the chain carries Phosphothreonine. A phosphoserine mark is found at Ser-1257 and Ser-1259. Basic and acidic residues predominate over residues 1265–1274 (PEEKRLKEDI). Residue Ser-1283 is modified to Phosphoserine. The segment at residues 1287–1299 (KGKRGRPPKPLGG) is a DNA-binding region (a.T hook 2). Residues 1310-1319 (TSKKGSKKKS) show a composition bias toward basic residues. 2 positions are modified to phosphoserine: Ser-1319 and Ser-1334. Residues 1342–1353 (KSKQHRVSRRAQ) are compositionally biased toward basic residues. Positions 1355–1372 (RAESPESSAIESTQSTPQ) are enriched in polar residues. Phosphoserine is present on residues Ser-1358 and Ser-1366. Thr-1367 carries the phosphothreonine modification. Ser-1369 is subject to Phosphoserine. 2 positions are modified to phosphothreonine: Thr-1370 and Thr-1381. The a.T hook 3 DNA-binding region spans 1372–1384 (QKGRGRPSKTPSP). The span at 1379-1388 (SKTPSPSQPK) shows a compositional bias: low complexity. 2 positions are modified to phosphoserine: Ser-1383 and Ser-1417. Residues 1422-1432 (IPQEETEEEEV) show a composition bias toward acidic residues. The span at 1437–1447 (VRRRSAKRERR) shows a compositional bias: basic residues.

It belongs to the PDS5 family. In terms of assembly, interacts with the cohesin complex. Interacts with RAD21; the interaction is direct. Interacts with WAPL (via FGF motifs) or CDCA5 (via the FGF motif); the interaction is direct, cohesin-dependent and competitive. In terms of tissue distribution, widely expressed.

It is found in the nucleus. Functionally, regulator of sister chromatid cohesion in mitosis which may stabilize cohesin complex association with chromatin. May couple sister chromatid cohesion during mitosis to DNA replication. Cohesion ensures that chromosome partitioning is accurate in both meiotic and mitotic cells and plays an important role in DNA repair. Plays a role in androgen-induced proliferative arrest in prostate cells. This Homo sapiens (Human) protein is Sister chromatid cohesion protein PDS5 homolog B (PDS5B).